We begin with the raw amino-acid sequence, 344 residues long: Melanocyte-stimulating hormone receptor (344 aa).

At 1–37 (MPMQGAQRKLLGSLNSTPTATSNLGLAANHTGAPCLE) the chain is on the extracellular side. A glycan (N-linked (GlcNAc...) asparagine) is linked at Asn29. Residues 38–63 (VSIPDGLFLSLGLVSLVENVLVVAAI) traverse the membrane as a helical segment. Over 64 to 72 (AKNRNLHSS) the chain is Cytoplasmic. The chain crosses the membrane as a helical span at residues 73–93 (MYCFICCLALSDLLVSGSNML). Over 94–118 (ETAIILLLEAGTLATRASVVQQLHN) the chain is Extracellular. Residues 119–140 (TIDVLTCSSMLCSLCFLGAIAV) traverse the membrane as a helical segment. At 141-163 (DRYISIFYALRYHSIMTLPRAQR) the chain is on the cytoplasmic side. A helical membrane pass occupies residues 164-183 (AIAAIWVTSVLSSTLFITYY). Residues 184 to 191 (DHAAVLLC) are Extracellular-facing. A helical transmembrane segment spans residues 192–211 (LVVFFLAMLVLMAVLYVHML). Residues 212 to 240 (ARACQHAQGIIRLHNRQLPAHKGFGLRGA) are Cytoplasmic-facing. A helical membrane pass occupies residues 241–266 (ATLTILLGIFFLCWGPFFLHLTLVVF). The Extracellular segment spans residues 267 to 279 (CPQHLTCNCIFKN). The helical transmembrane segment at 280–300 (FKVFLTLIICNTIIDPLIYAF) threads the bilayer. Residues 301–344 (RSQELRRTLKEVLLCSWWPGCGAEGGGDSVWPGSCVTLRGPLPP) are Cytoplasmic-facing. Cys315 carries S-palmitoyl cysteine lipidation.

The protein belongs to the G-protein coupled receptor 1 family. Interacts with MGRN1, but does not undergo MGRN1-mediated ubiquitination; this interaction competes with GNAS-binding and thus inhibits agonist-induced cAMP production. Interacts with OPN3; the interaction results in a decrease in MC1R-mediated cAMP signaling and ultimately a decrease in melanin production in melanocytes.

The protein resides in the cell membrane. In terms of biological role, receptor for MSH (alpha, beta and gamma) and ACTH. The activity of this receptor is mediated by G proteins which activate adenylate cyclase. Mediates melanogenesis, the production of eumelanin (black/brown) and phaeomelanin (red/yellow), via regulation of cAMP signaling in melanocytes. The sequence is that of Melanocyte-stimulating hormone receptor (MC1R) from Mico argentatus (Silvery marmoset).